A 339-amino-acid chain; its full sequence is Transaldolase (339 aa).

Lys-135 (schiff-base intermediate with substrate) is an active-site residue.

The protein belongs to the transaldolase family. Type 1 subfamily. As to quaternary structure, homodimer.

The protein localises to the cytoplasm. The catalysed reaction is D-sedoheptulose 7-phosphate + D-glyceraldehyde 3-phosphate = D-erythrose 4-phosphate + beta-D-fructose 6-phosphate. It functions in the pathway carbohydrate degradation; pentose phosphate pathway; D-glyceraldehyde 3-phosphate and beta-D-fructose 6-phosphate from D-ribose 5-phosphate and D-xylulose 5-phosphate (non-oxidative stage): step 2/3. In terms of biological role, transaldolase is important for the balance of metabolites in the pentose-phosphate pathway. This is Transaldolase from Prochlorococcus marinus (strain MIT 9211).